The sequence spans 754 residues: 5-methyltetrahydropteroyltriglutamate--homocysteine methyltransferase (754 aa).

Residues 17-20 (RELK) and Lys-117 each bind 5-methyltetrahydropteroyltri-L-glutamate. Residues 431–433 (IGS) and Glu-484 contribute to the L-homocysteine site. L-methionine contacts are provided by residues 431–433 (IGS) and Glu-484. Residues 515–516 (RC) and Trp-561 contribute to the 5-methyltetrahydropteroyltri-L-glutamate site. Asp-599 is an L-homocysteine binding site. Residue Asp-599 participates in L-methionine binding. Glu-605 lines the 5-methyltetrahydropteroyltri-L-glutamate pocket. Zn(2+) contacts are provided by His-641, Cys-643, and Glu-665. His-694 functions as the Proton donor in the catalytic mechanism. Residue Cys-726 coordinates Zn(2+).

This sequence belongs to the vitamin-B12 independent methionine synthase family. It depends on Zn(2+) as a cofactor.

The enzyme catalyses 5-methyltetrahydropteroyltri-L-glutamate + L-homocysteine = tetrahydropteroyltri-L-glutamate + L-methionine. Its pathway is amino-acid biosynthesis; L-methionine biosynthesis via de novo pathway; L-methionine from L-homocysteine (MetE route): step 1/1. Functionally, catalyzes the transfer of a methyl group from 5-methyltetrahydrofolate to homocysteine resulting in methionine formation. The protein is 5-methyltetrahydropteroyltriglutamate--homocysteine methyltransferase of Salmonella paratyphi A (strain ATCC 9150 / SARB42).